A 123-amino-acid chain; its full sequence is Fluoride-specific ion channel FluC (123 aa).

Helical transmembrane passes span 1-21 (MLEILLVFLGGGLGSIARYLM), 32-52 (ILSLGTFTVNIIGSFIIGLVI), 64-84 (IGLLLATGFCGGFTTFSSFSY), and 99-119 (FGYTIMSLFWGFAATFLGIYL). G74 and T77 together coordinate Na(+).

This sequence belongs to the fluoride channel Fluc/FEX (TC 1.A.43) family.

Its subcellular location is the cell inner membrane. The enzyme catalyses fluoride(in) = fluoride(out). Its activity is regulated as follows. Na(+) is not transported, but it plays an essential structural role and its presence is essential for fluoride channel function. Functionally, fluoride-specific ion channel. Important for reducing fluoride concentration in the cell, thus reducing its toxicity. The chain is Fluoride-specific ion channel FluC from Gloeothece citriformis (strain PCC 7424) (Cyanothece sp. (strain PCC 7424)).